The sequence spans 446 residues: Rhoptry surface protein CERLI1 (446 aa).

Residues 39–208 (KPIGQLYRLM…NQTKNNEKIE (170 aa)) enclose the C2 domain. The region spanning 252–363 (GYLLHSNFYI…ILVSNYKRER (112 aa)) is the PH domain.

The protein resides in the cytoplasmic vesicle. It is found in the secretory vesicle. Its subcellular location is the rhoptry membrane. Functionally, essential for merozoite invasion of host cells by controlling rhoptry secretion. Binds to phosphatidic acid (PA) and phosphatidylinositol 4,5-bisphosphate (PIP2) lipids and thus, likely contributes to the assembly of the machinery that docks or primes the rhoptry to the parasite cell membrane prior to the fusion with the host cell membrane. This chain is Rhoptry surface protein CERLI1, found in Plasmodium falciparum (isolate 3D7).